Reading from the N-terminus, the 126-residue chain is Holo-[acyl-carrier-protein] synthase (126 aa).

Asp-9 and Glu-58 together coordinate Mg(2+).

The protein belongs to the P-Pant transferase superfamily. AcpS family. Requires Mg(2+) as cofactor.

The protein localises to the cytoplasm. It carries out the reaction apo-[ACP] + CoA = holo-[ACP] + adenosine 3',5'-bisphosphate + H(+). In terms of biological role, transfers the 4'-phosphopantetheine moiety from coenzyme A to a Ser of acyl-carrier-protein. The sequence is that of Holo-[acyl-carrier-protein] synthase from Yersinia pseudotuberculosis serotype I (strain IP32953).